The primary structure comprises 188 residues: Probable RNA 2'-phosphotransferase (188 aa).

It belongs to the KptA/TPT1 family.

Its function is as follows. Removes the 2'-phosphate from RNA via an intermediate in which the phosphate is ADP-ribosylated by NAD followed by a presumed transesterification to release the RNA and generate ADP-ribose 1''-2''-cyclic phosphate (APPR&gt;P). May function as an ADP-ribosylase. The chain is Probable RNA 2'-phosphotransferase from Pseudomonas savastanoi pv. phaseolicola (strain 1448A / Race 6) (Pseudomonas syringae pv. phaseolicola (strain 1448A / Race 6)).